A 553-amino-acid polypeptide reads, in one-letter code: Dihydrolipoyllysine-residue acetyltransferase component of pyruvate dehydrogenase complex (553 aa).

Positions 2 to 77 constitute a Lipoyl-binding 1 domain; the sequence is AFSVQMPALG…EVGGELAVIG (76 aa). K43 bears the N6-lipoyllysine mark. The disordered stretch occupies residues 81-125; it reads DAGEAAAPAPEKVPAAQPESKPAPEPPPVQPTSGAPAGGDAKPVL. Positions 84-100 are enriched in low complexity; the sequence is EAAAPAPEKVPAAQPES. Pro residues predominate over residues 101–110; sequence KPAPEPPPVQ. Residues 121-196 enclose the Lipoyl-binding 2 domain; that stretch reads AKPVLMPELG…PVGGELARIG (76 aa). K162 bears the N6-lipoyllysine mark. 2 disordered regions span residues 204–238 and 278–321; these read APAP…AGAA and AAAE…TQKA. Positions 206 to 232 are enriched in pro residues; sequence APKPAPKPVPEPAPTPKAEPAPSPPAA. The 38-residue stretch at 243 to 280 folds into the Peripheral subunit-binding (PSBD) domain; that stretch reads YVTPLVRKLASENNIDLAGVTGTGVGGRIRKQDVLAAA. Positions 288 to 300 are enriched in low complexity; sequence APAPAAQAAAAPA. Active-site residues include H523 and D527.

Belongs to the 2-oxoacid dehydrogenase family. As to quaternary structure, forms a 24-polypeptide structural core with octahedral symmetry. Part of the PDH complex, consisting of multiple copies of AceE (E1), DlaT (E2) and Lpd (E3). The cofactor is (R)-lipoate.

It carries out the reaction N(6)-[(R)-dihydrolipoyl]-L-lysyl-[protein] + acetyl-CoA = N(6)-[(R)-S(8)-acetyldihydrolipoyl]-L-lysyl-[protein] + CoA. In terms of biological role, component of the pyruvate dehydrogenase (PDH) complex, that catalyzes the overall conversion of pyruvate to acetyl-CoA and CO(2). In Mycobacterium bovis (strain ATCC BAA-935 / AF2122/97), this protein is Dihydrolipoyllysine-residue acetyltransferase component of pyruvate dehydrogenase complex (dlaT).